The primary structure comprises 196 residues: NADH-quinone oxidoreductase subunit B (196 aa).

4 residues coordinate [4Fe-4S] cluster: Cys75, Cys76, Cys140, and Cys170.

The protein belongs to the complex I 20 kDa subunit family. As to quaternary structure, NDH-1 is composed of 14 different subunits. Subunits NuoB, C, D, E, F, and G constitute the peripheral sector of the complex. It depends on [4Fe-4S] cluster as a cofactor.

It localises to the cell inner membrane. The enzyme catalyses a quinone + NADH + 5 H(+)(in) = a quinol + NAD(+) + 4 H(+)(out). NDH-1 shuttles electrons from NADH, via FMN and iron-sulfur (Fe-S) centers, to quinones in the respiratory chain. Couples the redox reaction to proton translocation (for every two electrons transferred, four hydrogen ions are translocated across the cytoplasmic membrane), and thus conserves the redox energy in a proton gradient. This chain is NADH-quinone oxidoreductase subunit B, found in Caulobacter sp. (strain K31).